Consider the following 104-residue polypeptide: Large ribosomal subunit protein uL24 (104 aa).

A compositionally biased stretch (basic and acidic residues) spans 82 to 92; the sequence is RIGYRTDENGK. Residues 82–104 form a disordered region; the sequence is RIGYRTDENGKRVRISRRNGKDI. Positions 93 to 104 are enriched in basic residues; that stretch reads RVRISRRNGKDI.

It belongs to the universal ribosomal protein uL24 family. As to quaternary structure, part of the 50S ribosomal subunit.

Functionally, one of two assembly initiator proteins, it binds directly to the 5'-end of the 23S rRNA, where it nucleates assembly of the 50S subunit. One of the proteins that surrounds the polypeptide exit tunnel on the outside of the subunit. The protein is Large ribosomal subunit protein uL24 of Nocardia farcinica (strain IFM 10152).